A 645-amino-acid chain; its full sequence is MKIYVDGREVIINDNERNLLEALKNVGIEIPNLCYLSEASIYGACRMCLVEINGQITTSCTLKPYEGMKVKTNTPEIYEMRRNILELILATHNRDCTTCDRNGSCKLQKYAEDFGIRKIRFEALKKEHVRDESAPVVRDTSKCILCGDCVRVCEEIQGVGVIEFAKRGFESVVTTAFDTPLIETECVLCGQCVAYCPTGALSIRNDIDKLIEALESDKIVIGMIAPAVRAAIQEEFGIDEDVAMAEKLVSFLKTIGFDKVFDVSFGADLVAYEEAHEFYERLKKGERLPQFTSCCPAWVKHAEHTYPQYLQNLSSVKSPQQALGTVIKKIYARKLGVPEEKIFLVSFMPCTAKKFEAEREEHEGIVDIVLTTRELAQLIKMSRIDINRVEPQPFDRPYGVSSQAGLGFGKAGGVFSCVLSVLNEEIGIEKVDVKSPEDGIRVAEVTLKDGTSFKGAVIYGLGKVKKFLEERKDVEIIEVMACNYGCVGGGGQPYPNDSRIREHRAKVLRDTMGIKSLLTPVENLFLMKLYEEDLKDEHTRHEILHTTYRPRRRYPEKDVEILPVPNGEKRTVKVCLGTSCYTKGSYEILKKLVDYVKENDMEGKIEVLGTFCVENCGASPNVIVDDKIIGGATFEKVLEELSKNG.

Positions 1–76 (MKIYVDGREV…GMKVKTNTPE (76 aa)) constitute a 2Fe-2S ferredoxin-type domain. C34, C45, C48, and C60 together coordinate [2Fe-2S] cluster. The region spanning 76 to 115 (EIYEMRRNILELILATHNRDCTTCDRNGSCKLQKYAEDFG) is the 4Fe-4S His(Cys)3-ligated-type domain. Residues H92, C96, C99, C105, C143, C146, C149, C153, C186, C189, C192, C196, C295, C350, C482, and C486 each coordinate [4Fe-4S] cluster. 2 consecutive 4Fe-4S ferredoxin-type domains span residues 133–164 (SAPV…VIEF) and 178–206 (DTPL…IRND). C486 contributes to the Fe(2+) binding site. C575, C580, C612, and C616 together coordinate [2Fe-2S] cluster.

In terms of assembly, heterotrimer composed of HydA (alpha subunit), HydB (beta subunit) and HydC (gamma subunit). Near neutral and acidic pH conditions favor oligomerization of the heterotrimeric holoenzyme. [2Fe-2S] cluster serves as cofactor. It depends on [4Fe-4S] cluster as a cofactor. The cofactor is Fe(2+).

It is found in the cytoplasm. The enzyme catalyses 2 H2 + 2 oxidized [2Fe-2S]-[ferredoxin] + NAD(+) = 2 reduced [2Fe-2S]-[ferredoxin] + NADH + 3 H(+). Its function is as follows. Catalyzes the oxidation of the physiological electron carriers NADH and reduced ferredoxin, coupled to the production of H(2). Acts as a bifurcating [FeFe] hydrogenase, which uses the exergonic oxidation of reduced ferredoxin to drive the unfavorable oxidation of NADH to produce H(2). The alpha subunit contains the catalytic H-cluster. This is Bifurcating [FeFe] hydrogenase alpha subunit from Thermotoga maritima (strain ATCC 43589 / DSM 3109 / JCM 10099 / NBRC 100826 / MSB8).